The chain runs to 471 residues: MSEQKIGKITQVIGPVVDVEFEPGQLPNILNACTVTNPGINDVPDNLVIEIAQHLGDNVCRCIAMDQTDGLVRGMVVRDTGLPITIPVGEGALGRIMNVVGRPVDGLGPIPAKTSMSIHRDAPLFTEQDTEVRVLETGIKVIDLLVPFPLGGKMGLFGGAGCGKTVIMMEMVNNIAMHHGGISVFCGVGERTREGNDLYNEMKESGVLPKAALVYGQMTEPPGARARVALTGLTAAEYFRDEEGQDVLFFVDNIFRFTQAGSEVSALLGRIPSAVGYQPTLATDLGALQERITSTNKGSITAVQCVYVPADDLTDPAPATTFAHLDGTVVLSRQISELGIYPAVDPLDSTSRILDPNVIGEEHYDVARGVQVSLQKYKDLQDIIAILGMDELSEEDQQLVSRARKIQRYLSQPFTVAEVFTGMPGKFVKVADTVQGFKEILEGKHDALNENSFYMVGSIDEAVAKDAASKA.

158–165 (GGAGCGKT) provides a ligand contact to ATP.

It belongs to the ATPase alpha/beta chains family. As to quaternary structure, F-type ATPases have 2 components, CF(1) - the catalytic core - and CF(0) - the membrane proton channel. CF(1) has five subunits: alpha(3), beta(3), gamma(1), delta(1), epsilon(1). CF(0) has three main subunits: a(1), b(2) and c(9-12). The alpha and beta chains form an alternating ring which encloses part of the gamma chain. CF(1) is attached to CF(0) by a central stalk formed by the gamma and epsilon chains, while a peripheral stalk is formed by the delta and b chains.

It localises to the cell inner membrane. It catalyses the reaction ATP + H2O + 4 H(+)(in) = ADP + phosphate + 5 H(+)(out). In terms of biological role, produces ATP from ADP in the presence of a proton gradient across the membrane. The catalytic sites are hosted primarily by the beta subunits. This chain is ATP synthase subunit beta, found in Desulfotalea psychrophila (strain LSv54 / DSM 12343).